The chain runs to 944 residues: Isoleucine--tRNA ligase (944 aa).

The 'HIGH' region signature appears at 58-68; the sequence is PYANGSIHIGH. Glutamate 563 is an L-isoleucyl-5'-AMP binding site. The short motif at 604–608 is the 'KMSKS' region element; sequence KMSKS. Lysine 607 contacts ATP. The Zn(2+) site is built by cysteine 907, cysteine 910, cysteine 927, and cysteine 930.

The protein belongs to the class-I aminoacyl-tRNA synthetase family. IleS type 1 subfamily. In terms of assembly, monomer. It depends on Zn(2+) as a cofactor.

It is found in the cytoplasm. It carries out the reaction tRNA(Ile) + L-isoleucine + ATP = L-isoleucyl-tRNA(Ile) + AMP + diphosphate. Its function is as follows. Catalyzes the attachment of isoleucine to tRNA(Ile). As IleRS can inadvertently accommodate and process structurally similar amino acids such as valine, to avoid such errors it has two additional distinct tRNA(Ile)-dependent editing activities. One activity is designated as 'pretransfer' editing and involves the hydrolysis of activated Val-AMP. The other activity is designated 'posttransfer' editing and involves deacylation of mischarged Val-tRNA(Ile). This Salmonella typhi protein is Isoleucine--tRNA ligase.